An 810-amino-acid polypeptide reads, in one-letter code: RING finger protein unkempt homolog (810 aa).

Residues 1–24 (MSKGPGPGGSAASSAPPAATAQVL) form a disordered region. Residues 10 to 19 (SAASSAPPAA) show a composition bias toward low complexity. C3H1-type zinc fingers lie at residues 84 to 113 (YSPDVYCTKYDEATGLCPEGDECPFLHRTT), 124 to 154 (YYKTGICIHETDSKGNCTKNGLHCAFAHGPH), 215 to 241 (NYKTEPCKKPPRLCRQGYACPYYHNSK), 251 to 285 (KYRSSPCPNVKHGDEWGDPGKCENGDACQYCHTRT), and 293 to 321 (IYKSTKCNDMQQSGSCPRGPFCAFAHVEQ). Residues 239 to 265 (NSKDRRRSPRKHKYRSSPCPNVKHGDE) are disordered. Serine 240 carries the phosphoserine modification. Over residues 241–253 (KDRRRSPRKHKYR) the composition is skewed to basic residues. Residues 324–343 (LSDDLQPSSTVSSPTQPGPV) are disordered. Low complexity predominate over residues 329–343 (QPSSTVSSPTQPGPV). 3 positions are modified to phosphoserine: serine 374, serine 378, and serine 385. The span at 569 to 585 (SASFHSASPSPPVSLSS) shows a compositional bias: low complexity. Residues 569–602 (SASFHSASPSPPVSLSSHFLQQPQGHLSQSENTF) are disordered. Residues 586 to 602 (HFLQQPQGHLSQSENTF) are compositionally biased toward polar residues. Serine 631 bears the Phosphoserine mark. Residues 643 to 723 (GAAELARLRQ…QEELERLHSG (81 aa)) are a coiled coil. The RING-type; degenerate zinc-finger motif lies at 766–801 (SVKCLKCQEQNRAVLPCQHAVLCELCAEGSECPVCQ).

This sequence belongs to the unkempt family.

It localises to the cytoplasm. Functionally, sequence-specific RNA-binding protein which plays an important role in the establishment and maintenance of the early morphology of cortical neurons during embryonic development. Acts as a translation repressor and controls a translationally regulated cell morphology program to ensure proper structuring of the nervous system. Translational control depends on recognition of its binding element within target mRNAs which consists of a mandatory UAG trimer upstream of a U/A-rich motif. Associated with polysomes. In Canis lupus familiaris (Dog), this protein is RING finger protein unkempt homolog (UNK).